The sequence spans 1673 residues: Protein TIC 214 (1673 aa).

The next 6 membrane-spanning stretches (helical) occupy residues 18-38 (IINS…FSIG), 67-87 (FITG…HLAL), 90-110 (PHTI…CNTH), 127-147 (LSIQ…HFIL), 175-195 (VGWI…VVWI), and 218-238 (SMSI…YYLG).

It belongs to the TIC214 family. Part of the Tic complex.

The protein localises to the plastid. It is found in the chloroplast inner membrane. Involved in protein precursor import into chloroplasts. May be part of an intermediate translocation complex acting as a protein-conducting channel at the inner envelope. This chain is Protein TIC 214, found in Lactuca sativa (Garden lettuce).